The chain runs to 725 residues: Manganese-exporting P-type ATPase (725 aa).

The 68-residue stretch at 25–92 (GRMRIQIEWV…AISGAAHVAA (68 aa)) folds into the HMA domain. 6 consecutive transmembrane segments (helical) span residues 101-119 (HSSD…GAAA), 142-160 (LVAS…RGAL), 165-179 (TGTD…IASL), 188-202 (LAVL…YLQD), 335-359 (VGEN…AITK), and 365-383 (MTVL…TPTA). Catalysis depends on aspartate 416, which acts as the 4-aspartylphosphate intermediate. Mg(2+)-binding residues include aspartate 416, threonine 418, and aspartate 618. 2 consecutive transmembrane segments (helical) span residues 669-688 (AVEV…AAGL) and 698-717 (PVLA…ANSS).

The protein belongs to the cation transport ATPase (P-type) (TC 3.A.3) family. Type IB subfamily.

It localises to the cell membrane. It catalyses the reaction Mn(2+)(in) + ATP + H2O = Mn(2+)(out) + ADP + phosphate + H(+). Its function is as follows. High affinity, slow turnover Mn(2+) transporting ATPase. The chain is Manganese-exporting P-type ATPase (ctpC) from Mycobacterium leprae (strain TN).